The following is a 343-amino-acid chain: Tribbles homolog 2 (343 aa).

The tract at residues 25–50 (EELSSIRSAEPSQSFSPNLGSPSPPE) is disordered. Residues 29 to 45 (SIRSAEPSQSFSPNLGS) are compositionally biased toward polar residues. The Protein kinase domain maps to 61–308 (IGKYLLLEPL…SQEILDHPWF (248 aa)).

The protein belongs to the protein kinase superfamily. CAMK Ser/Thr protein kinase family. Tribbles subfamily.

The protein resides in the cytoplasm. The protein localises to the cytoskeleton. Functionally, interacts with MAPK kinases and regulates activation of MAP kinases. Does not display kinase activity. This is Tribbles homolog 2 from Mus musculus (Mouse).